We begin with the raw amino-acid sequence, 406 residues long: MGPSAPLLLFFLLSWPGSLQGQQHHLVEYMERRLAALEERLAQCQDQSSRHAAELRDFKNKMLPLLEVAEKERETLRTEADSISGRVDRLEREVDYLETQNPALPCVELDEKVTGGPGTKGKGRRNEKYDMVTDCSYTISQVRSMKILKRFGGSAGLWTKDPLGPAEKIYVLDGTQNDTAFVFPRLRDFTLTMAARKASRIRVPFPWVGTGQLVYGGFLYYARRPPGGAGGGGELENTLQLIKFHLANRTVVDSSVFPAERLIPPYGLTVDTYIDLAADEEGLWAVYATREDDRHLCLAKLDPQTLDTEQQWDTPCPRENAEAAFVICGTLYVVYNTRPASRARIQCSFDASGTLTPERAALSYFPRRYGAHASLRYNPRERQLYAWDDGYQIVYKLEMKKKEEEV.

The signal sequence occupies residues 1 to 21 (MGPSAPLLLFFLLSWPGSLQG). Residues 22 to 101 (QQHHLVEYME…REVDYLETQN (80 aa)) adopt a coiled-coil conformation. The Olfactomedin-like domain occupies 134–401 (DCSYTISQVR…QIVYKLEMKK (268 aa)). Cysteines 135 and 328 form a disulfide. Asn-248 carries N-linked (GlcNAc...) asparagine glycosylation.

It belongs to the OLFML3 family.

It localises to the secreted. Functionally, secreted scaffold protein that plays an essential role in dorsoventral patterning during early development. Stabilizes axial formation by restricting chordin (CHRD) activity on the dorsal side. Acts by facilitating the association between the tolloid proteases and their substrate chordin (CHRD), leading to enhance chordin (CHRD) degradation. May have matrix-related function involved in placental and embryonic development, or play a similar role in other physiological processes. This chain is Olfactomedin-like protein 3 (Olfml3), found in Rattus norvegicus (Rat).